The primary structure comprises 426 residues: Serine--tRNA ligase (426 aa).

229-231 (TAE) is a binding site for L-serine. 260–262 (RSE) contacts ATP. Glutamate 283 contributes to the L-serine binding site. 347 to 350 (EIAS) contacts ATP. Residue serine 383 participates in L-serine binding.

Belongs to the class-II aminoacyl-tRNA synthetase family. Type-1 seryl-tRNA synthetase subfamily. In terms of assembly, homodimer. The tRNA molecule binds across the dimer.

The protein resides in the cytoplasm. It catalyses the reaction tRNA(Ser) + L-serine + ATP = L-seryl-tRNA(Ser) + AMP + diphosphate + H(+). The enzyme catalyses tRNA(Sec) + L-serine + ATP = L-seryl-tRNA(Sec) + AMP + diphosphate + H(+). Its pathway is aminoacyl-tRNA biosynthesis; selenocysteinyl-tRNA(Sec) biosynthesis; L-seryl-tRNA(Sec) from L-serine and tRNA(Sec): step 1/1. Its function is as follows. Catalyzes the attachment of serine to tRNA(Ser). Is also able to aminoacylate tRNA(Sec) with serine, to form the misacylated tRNA L-seryl-tRNA(Sec), which will be further converted into selenocysteinyl-tRNA(Sec). This chain is Serine--tRNA ligase, found in Rickettsia bellii (strain OSU 85-389).